Reading from the N-terminus, the 162-residue chain is UPF0303 protein RL3365 (162 aa).

This sequence belongs to the UPF0303 family.

In Rhizobium johnstonii (strain DSM 114642 / LMG 32736 / 3841) (Rhizobium leguminosarum bv. viciae), this protein is UPF0303 protein RL3365.